The sequence spans 318 residues: Beta-ketoacyl-[acyl-carrier-protein] synthase III (318 aa).

Active-site residues include cysteine 112 and histidine 245. The tract at residues 246 to 250 (QANIR) is ACP-binding. Residue asparagine 275 is part of the active site.

This sequence belongs to the thiolase-like superfamily. FabH family. As to quaternary structure, homodimer.

The protein localises to the cytoplasm. The enzyme catalyses malonyl-[ACP] + acetyl-CoA + H(+) = 3-oxobutanoyl-[ACP] + CO2 + CoA. The protein operates within lipid metabolism; fatty acid biosynthesis. Its function is as follows. Catalyzes the condensation reaction of fatty acid synthesis by the addition to an acyl acceptor of two carbons from malonyl-ACP. Catalyzes the first condensation reaction which initiates fatty acid synthesis and may therefore play a role in governing the total rate of fatty acid production. Possesses both acetoacetyl-ACP synthase and acetyl transacylase activities. Its substrate specificity determines the biosynthesis of branched-chain and/or straight-chain of fatty acids. The chain is Beta-ketoacyl-[acyl-carrier-protein] synthase III from Nitrosomonas europaea (strain ATCC 19718 / CIP 103999 / KCTC 2705 / NBRC 14298).